Consider the following 612-residue polypeptide: Sulfite reductase [NADPH] hemoprotein beta-component (612 aa).

The tract at residues methionine 1–glutamate 26 is disordered. [4Fe-4S] cluster is bound by residues cysteine 469, cysteine 475, cysteine 514, and cysteine 518. Position 518 (cysteine 518) interacts with siroheme.

This sequence belongs to the nitrite and sulfite reductase 4Fe-4S domain family. Alpha(8)-beta(8). The alpha component is a flavoprotein, the beta component is a hemoprotein. Siroheme serves as cofactor. Requires [4Fe-4S] cluster as cofactor.

It catalyses the reaction hydrogen sulfide + 3 NADP(+) + 3 H2O = sulfite + 3 NADPH + 4 H(+). Its pathway is sulfur metabolism; hydrogen sulfide biosynthesis; hydrogen sulfide from sulfite (NADPH route): step 1/1. Component of the sulfite reductase complex that catalyzes the 6-electron reduction of sulfite to sulfide. This is one of several activities required for the biosynthesis of L-cysteine from sulfate. In Methylorubrum extorquens (strain PA1) (Methylobacterium extorquens), this protein is Sulfite reductase [NADPH] hemoprotein beta-component.